Reading from the N-terminus, the 90-residue chain is uncharacterized protein (90 aa).

A helical membrane pass occupies residues 46 to 62; it reads MALLVVFLVSLFACTTI.

The protein resides in the membrane. This is an uncharacterized protein from Haemophilus influenzae (strain ATCC 51907 / DSM 11121 / KW20 / Rd).